The primary structure comprises 139 residues: Arsenate reductase (139 aa).

Residues Cys10, Cys82, and Cys89 each act as nucleophile in the active site. Disulfide bonds link Cys10–Cys82 and Cys82–Cys89.

This sequence belongs to the low molecular weight phosphotyrosine protein phosphatase family. Thioredoxin-coupled ArsC subfamily.

The protein localises to the cytoplasm. It carries out the reaction arsenate + [thioredoxin]-dithiol + H(+) = arsenite + [thioredoxin]-disulfide + H2O. Functionally, catalyzes the reduction of arsenate [As(V)] to arsenite [As(III)]. This Bacillus licheniformis (strain ATCC 14580 / DSM 13 / JCM 2505 / CCUG 7422 / NBRC 12200 / NCIMB 9375 / NCTC 10341 / NRRL NRS-1264 / Gibson 46) protein is Arsenate reductase.